The chain runs to 151 residues: Transcriptional repressor NrdR (151 aa).

A zinc finger lies at 3 to 34 (CPFCSHPDTQVVETREAEDGGFIRRRRQCGGC). Positions 49–139 (PAIVKKDGRR…VYRSFEDVDD (91 aa)) constitute an ATP-cone domain.

It belongs to the NrdR family. Zn(2+) serves as cofactor.

Its function is as follows. Negatively regulates transcription of bacterial ribonucleotide reductase nrd genes and operons by binding to NrdR-boxes. This is Transcriptional repressor NrdR from Delftia acidovorans (strain DSM 14801 / SPH-1).